We begin with the raw amino-acid sequence, 306 residues long: MTSQAATTTTTAAAAAAWTREDDKAFENALAACAAPPPADGGAPDDDWFAALAASVPGARSAEEVRRHYEALVEDVAAIDAGRVPLPRYAGEESAAPPDGAGAAAAASKDGGHRRDERKGGGGGYDGGKSCSKAEQERRKGIPWTEEEHRLFLLGLDKFGKGDWRSISRNFVISRTPTQVASHAQKYFIRLNSMNRDRRRSSIHDITSVTAGDQVAAQQGAPITGHQATGNPAAAALGPPGMKHHHHHHPGGAPPPMPMYSAAPMGHPVAGHMVPAAVGTPVVFPPGHAPYVVPVGYPAPPAKMHQ.

The 56-residue stretch at 18–73 (WTREDDKAFENALAACAAPPPADGGAPDDDWFAALAASVPGARSAEEVRRHYEALV) folds into the Myb-like domain. Positions 72–86 (LVEDVAAIDAGRVPL) match the Nuclear export signal 1 motif. The disordered stretch occupies residues 89 to 142 (YAGEESAAPPDGAGAAAAASKDGGHRRDERKGGGGGYDGGKSCSKAEQERRKGI). The span at 92–109 (EESAAPPDGAGAAAAASK) shows a compositional bias: low complexity. 2 stretches are compositionally biased toward basic and acidic residues: residues 110–120 (DGGHRRDERKG) and 132–142 (SKAEQERRKGI). Positions 133-140 (KAEQERRK) match the Nuclear localization signal 1 motif. The 57-residue stretch at 136 to 192 (QERRKGIPWTEEEHRLFLLGLDKFGKGDWRSISRNFVISRTPTQVASHAQKYFIRLN) folds into the HTH myb-type domain. Residues 164-188 (WRSISRNFVISRTPTQVASHAQKYF) constitute a DNA-binding region (H-T-H motif). The short motif at 196–200 (RDRRR) is the Nuclear localization signal 2 element. Residues 203-215 (IHDITSVTAGDQV) carry the Nuclear export signal 2 motif. A compositionally biased stretch (low complexity) spans 228 to 241 (ATGNPAAAALGPPG). The disordered stretch occupies residues 228–255 (ATGNPAAAALGPPGMKHHHHHHPGGAPP).

In terms of assembly, homodimer. Interacts with GAMYB. In terms of tissue distribution, expressed in aboveground tissues, with the highest level in leaves.

Its subcellular location is the nucleus. The protein resides in the cytoplasm. Its function is as follows. Transcription activator that binds to 5'-TATCCA-3' elements in gene promoters. Derepresses strongly the sugar-repressed transcription of promoters containing SRS or 5'-TATCCA-3' elements. Functions with GAMYB to integrate diverse nutrient starvation and gibberellin (GA) signaling pathways during germination of grains. Sugar, nitrogen and phosphate starvation signals converge and interconnect with GA to promote the co-nuclear import of MYBS1 and GAMYB, resulting in the expression of a large set of GA-inducible hydrolases, transporters, and regulators that are essential for mobilization of nutrient reserves in the endosperm to support seedling growth. The protein is Transcription factor MYBS1 of Oryza sativa subsp. japonica (Rice).